The sequence spans 304 residues: Calmodulin-lysine N-methyltransferase (304 aa).

This sequence belongs to the class I-like SAM-binding methyltransferase superfamily. CLNMT methyltransferase family. As to quaternary structure, monomer. Expressed in discreet spatial and tissue-specific patterns including root tips, leaves-tips, floral buds, stamens, hydathodes, stigma, anther, siliques, apical meristems and germinating seeds. Also observed at high levels in the root stele region.

Its subcellular location is the cytoplasm. The protein resides in the nucleus. The catalysed reaction is [calmodulin]-L-lysine + S-adenosyl-L-methionine = [calmodulin]-N(6)-methyl-L-lysine + S-adenosyl-L-homocysteine + H(+). Its function is as follows. Catalyzes the trimethylation of calmodulin. Regulates roots development probably by modulating auxin signaling responses. May be involved in gravitropism. Involved in abscisic acid (ABA)-mediated and abiotic stress responses, including salt (NaCl), cold, drought and heat stresses. The chain is Calmodulin-lysine N-methyltransferase from Arabidopsis thaliana (Mouse-ear cress).